The sequence spans 278 residues: Esterase dbaE (278 aa).

Catalysis depends on charge relay system residues serine 124, aspartate 220, and histidine 248.

It belongs to the LovG family.

Its pathway is secondary metabolite biosynthesis. In terms of biological role, esterase; part of the gene cluster that mediates the biosynthesis of the antibiotic 2,4-dihydroxy-3-methyl-6-(2-oxopropyl)benzaldehyde (DHMBA) and its derivatives. The direct non-reducing polyketide synthase dbaI product is 2,4-dihydroxy-3-methyl-6-(2-oxopropyl)benzaldehyde (DHMBA), produced by condensation of one acetyl-CoA starter unit with 4 malonyl-CoA units and one methylation step. The FAD-dependent monooxygenase dbaH is responsible for the synthesis of yellow pigments derived from the oxidation of DHMBA. The roles of dbaB, C, E and F have still to be determined. The sequence is that of Esterase dbaE from Emericella nidulans (strain FGSC A4 / ATCC 38163 / CBS 112.46 / NRRL 194 / M139) (Aspergillus nidulans).